The primary structure comprises 494 residues: Serine carboxypeptidase-like 21 (494 aa).

The signal sequence occupies residues 1–23 (MGRLVEAIIASILLSLCFTITKS). 2 N-linked (GlcNAc...) asparagine glycosylation sites follow: Asn-37 and Asn-69. 3 disulfides stabilise this stretch: Cys-85–Cys-383, Cys-247–Cys-263, and Cys-286–Cys-350. Ser-179 is an active-site residue. 2 N-linked (GlcNAc...) asparagine glycosylation sites follow: Asn-198 and Asn-248. N-linked (GlcNAc...) asparagine glycosylation occurs at Asn-402. Residue Asp-418 is part of the active site. Asn-460 carries an N-linked (GlcNAc...) asparagine glycan. His-471 is a catalytic residue.

The protein belongs to the peptidase S10 family. Expressed in flowers and siliques.

The protein localises to the secreted. Its function is as follows. Probable carboxypeptidase. This is Serine carboxypeptidase-like 21 (SCPL21) from Arabidopsis thaliana (Mouse-ear cress).